The sequence spans 291 residues: S-methyl-5'-thioadenosine phosphorylase (291 aa).

Residues S12, 54-55, and 87-88 contribute to the phosphate site; these read RH and SA. M185 is a substrate binding site. T186 provides a ligand contact to phosphate. 209 to 211 is a substrate binding site; the sequence is DFD.

The protein belongs to the PNP/MTAP phosphorylase family. MTAP subfamily. Homohexamer. Dimer of a homotrimer.

It carries out the reaction S-methyl-5'-thioadenosine + phosphate = 5-(methylsulfanyl)-alpha-D-ribose 1-phosphate + adenine. It participates in amino-acid biosynthesis; L-methionine biosynthesis via salvage pathway; S-methyl-5-thio-alpha-D-ribose 1-phosphate from S-methyl-5'-thioadenosine (phosphorylase route): step 1/1. Catalyzes the reversible phosphorylation of S-methyl-5'-thioadenosine (MTA) to adenine and 5-methylthioribose-1-phosphate. Involved in the breakdown of MTA, a major by-product of polyamine biosynthesis. Responsible for the first step in the methionine salvage pathway after MTA has been generated from S-adenosylmethionine. Has broad substrate specificity with 6-aminopurine nucleosides as preferred substrates. The polypeptide is S-methyl-5'-thioadenosine phosphorylase (Bradyrhizobium diazoefficiens (strain JCM 10833 / BCRC 13528 / IAM 13628 / NBRC 14792 / USDA 110)).